The chain runs to 780 residues: Cullin-5 (780 aa).

Serine 34 carries the post-translational modification Phosphoserine. Threonine 210 is modified (phosphothreonine). Residues 711-772 enclose the Cullin neddylation domain; the sequence is RILRTQEAII…HKYIRRDEAD (62 aa). Residue lysine 724 forms a Glycyl lysine isopeptide (Lys-Gly) (interchain with G-Cter in NEDD8) linkage.

This sequence belongs to the cullin family. As to quaternary structure, component of multiple cullin-5-RING E3 ubiquitin-protein ligase complexes (ECS complexes, also named CRL5 complexes) formed of CUL5, Elongin BC (ELOB and ELOC), RNF7/RBX2 and a variable SOCS box domain-containing protein as substrate-specific recognition component. CUL5-containing ECS complexes specifically contain RNF7/RBX2, and not RBX1, as catalytic subunit. Component of the ECS(ASB2) complex with the substrate recognition component ASB2. Component of the ECS(ASB6) complex with the substrate recognition component ASB6. Component of the ECS(ASB7) complex with the substrate recognition component ASB7. Component of the ECS(ASB9) complex with the substrate recognition component ASB9. Component of the ECS(ASB11) complex with the substrate recognition component ASB11. Component of the ECS(ASB12) complex with the substrate recognition component ASB12. Component of the ECS(LRRC41) complex with the substrate recognition component LRRC41. Component of the ECS(SOCS1) complex with the substrate recognition component SOCS1. Component of the ECS(SOCS2) complex with the substrate recognition component SOCS2. Component of the ECS(WSB1) complex with the substrate recognition subunit WSB1. Component of the ECS(SOCS3) complex with the substrate recognition component SOCS3. Component of the ECS(SOCS7) complex with the substrate recognition component SOCS7. Component of the ECS(SPSB1) complex with the substrate recognition component SPSB1. Component of the ECS(SPSB3) complex with the substrate recognition component SPSB3. Component of the ECS(SPSB2) complex with the substrate recognition component SPSB2. Component of the ECS(SPSB4) complex with the substrate recognition component SPSB4. Component of the ECS(RAB40) complex with the substrate recognition subunit RAB40A, RAB40B or RAB40C. Component of the ECS(KLHDC1) complex with the substrate recognition component KLHDC1. Component of the ECS(PCMTD1) complex with the substrate recognition subunit PCMTD1. May also form complexes containing RBX1 and ELOA or VHL; additional evidence is however required to confirm this result in vivo. Interacts (when neddylated) with ARIH2; leading to activate the E3 ligase activity of ARIH2. Interacts with ERCC6; the interaction is induced by DNA damaging agents or inhibitors of RNA polymerase II elongation. Interacts with ELOA (via the BC-box). Interacts (unneddylated form) with DCUN1D1, DCUN1D2, DCUN1D3, DCUN1D4 and DCUN1D5; these interactions promote the cullin neddylation. Neddylated; which enhances the ubiquitination activity of ECS complexes and prevents binding of the inhibitor CAND1. Deneddylated via its interaction with the COP9 signalosome (CSN).

Its subcellular location is the nucleus. The protein operates within protein modification; protein ubiquitination. Core component of multiple cullin-5-RING E3 ubiquitin-protein ligase complexes (ECS complexes, also named CRL5 complexes), which mediate the ubiquitination and subsequent proteasomal degradation of target proteins. Acts a scaffold protein that contributes to catalysis through positioning of the substrate and the ubiquitin-conjugating enzyme. The functional specificity of the E3 ubiquitin-protein ligase complex depends on the variable SOCS box-containing substrate recognition component. Acts as a key regulator of neuron positioning during cortex development: component of various SOCS-containing ECS complexes, such as the ECS(SOCS7) complex, that regulate reelin signaling by mediating ubiquitination and degradation of DAB1. ECS(SOCS1) seems to direct ubiquitination of JAK2. The ECS(SOCS2) complex mediates the ubiquitination and subsequent proteasomal degradation of phosphorylated EPOR and GHR. The ECS(SPSB3) complex catalyzes ubiquitination of nuclear CGAS. ECS(KLHDC1) complex is part of the DesCEND (destruction via C-end degrons) pathway and mediates ubiquitination and degradation of truncated SELENOS selenoprotein produced by failed UGA/Sec decoding, which ends with a glycine. The ECS(ASB9) complex mediates ubiquitination and degradation of CKB. As part of some ECS complex, promotes 'Lys-11'-linked ubiquitination and degradation of BTRC. As part of a multisubunit ECS complex, polyubiquitinates monoubiquitinated POLR2A. As part of the ECS(RAB40C) complex, mediates ANKRD28 ubiquitination and degradation, thereby regulating protein phosphatase 6 (PP6) complex activity and focal adhesion assembly during cell migration. As part of the ECS(RAB40A) complex, mediates RHOU 'Lys-48'-linked ubiquitination and degradation, thus inhibiting focal adhesion disassembly during cell migration. As part of the ECS(RAB40B) complex, mediates LIMA1/EPLIN and RAP2 ubiquitination, thereby regulating actin cytoskeleton dynamics and stress fiber formation during cell migration. May form a cell surface vasopressin receptor. The sequence is that of Cullin-5 from Rattus norvegicus (Rat).